We begin with the raw amino-acid sequence, 193 residues long: ATP-dependent protease subunit HslV (193 aa).

Residue Thr12 is part of the active site. Residues Ala167, Cys170, and Thr173 each contribute to the Na(+) site.

The protein belongs to the peptidase T1B family. HslV subfamily. In terms of assembly, a double ring-shaped homohexamer of HslV is capped on each side by a ring-shaped HslU homohexamer. The assembly of the HslU/HslV complex is dependent on binding of ATP.

The protein resides in the cytoplasm. The catalysed reaction is ATP-dependent cleavage of peptide bonds with broad specificity.. Allosterically activated by HslU binding. Functionally, protease subunit of a proteasome-like degradation complex believed to be a general protein degrading machinery. The polypeptide is ATP-dependent protease subunit HslV (Bartonella henselae (strain ATCC 49882 / DSM 28221 / CCUG 30454 / Houston 1) (Rochalimaea henselae)).